Here is a 462-residue protein sequence, read N- to C-terminus: Glycine--tRNA ligase (462 aa).

Substrate-binding residues include Arg98 and Glu174. ATP contacts are provided by residues 206–208 (RNE), 216–221 (FRTREF), 290–291 (EL), and 334–337 (GADR). 221–225 (FEQME) contributes to the substrate binding site. Residue 330–334 (EPSLG) coordinates substrate.

This sequence belongs to the class-II aminoacyl-tRNA synthetase family. Homodimer.

It is found in the cytoplasm. The enzyme catalyses tRNA(Gly) + glycine + ATP = glycyl-tRNA(Gly) + AMP + diphosphate. Its function is as follows. Catalyzes the attachment of glycine to tRNA(Gly). The protein is Glycine--tRNA ligase of Lachnoclostridium phytofermentans (strain ATCC 700394 / DSM 18823 / ISDg) (Clostridium phytofermentans).